Reading from the N-terminus, the 299-residue chain is tRNA dimethylallyltransferase (299 aa).

Residue 11 to 18 (GPTAVGKT) coordinates ATP. 13 to 18 (TAVGKT) is a substrate binding site. Residues 36–39 (DSQQ) are interaction with substrate tRNA.

This sequence belongs to the IPP transferase family. In terms of assembly, monomer. Mg(2+) serves as cofactor.

It catalyses the reaction adenosine(37) in tRNA + dimethylallyl diphosphate = N(6)-dimethylallyladenosine(37) in tRNA + diphosphate. Catalyzes the transfer of a dimethylallyl group onto the adenine at position 37 in tRNAs that read codons beginning with uridine, leading to the formation of N6-(dimethylallyl)adenosine (i(6)A). This Streptococcus pyogenes serotype M6 (strain ATCC BAA-946 / MGAS10394) protein is tRNA dimethylallyltransferase.